The primary structure comprises 133 residues: Aspartate 1-decarboxylase (133 aa).

Residue serine 26 is the Schiff-base intermediate with substrate; via pyruvic acid of the active site. Serine 26 carries the post-translational modification Pyruvic acid (Ser). Threonine 58 provides a ligand contact to substrate. Tyrosine 59 acts as the Proton donor in catalysis. A substrate-binding site is contributed by 74–76 (GAA).

The protein belongs to the PanD family. As to quaternary structure, heterooctamer of four alpha and four beta subunits. Requires pyruvate as cofactor. In terms of processing, is synthesized initially as an inactive proenzyme, which is activated by self-cleavage at a specific serine bond to produce a beta-subunit with a hydroxyl group at its C-terminus and an alpha-subunit with a pyruvoyl group at its N-terminus.

The protein localises to the cytoplasm. The catalysed reaction is L-aspartate + H(+) = beta-alanine + CO2. It functions in the pathway cofactor biosynthesis; (R)-pantothenate biosynthesis; beta-alanine from L-aspartate: step 1/1. In terms of biological role, catalyzes the pyruvoyl-dependent decarboxylation of aspartate to produce beta-alanine. In Legionella pneumophila subsp. pneumophila (strain Philadelphia 1 / ATCC 33152 / DSM 7513), this protein is Aspartate 1-decarboxylase.